The sequence spans 222 residues: GEM-like protein 4 (222 aa).

The 79-residue stretch at 95-173 folds into the GRAM domain; the sequence is KIFKRLFRVS…CKIDRVNQSQ (79 aa).

Belongs to the GEM family.

This is GEM-like protein 4 from Arabidopsis thaliana (Mouse-ear cress).